We begin with the raw amino-acid sequence, 289 residues long: Elongation factor Ts (289 aa).

Residues 80-83 form an involved in Mg(2+) ion dislocation from EF-Tu region; sequence TDFV.

The protein belongs to the EF-Ts family.

It is found in the cytoplasm. Functionally, associates with the EF-Tu.GDP complex and induces the exchange of GDP to GTP. It remains bound to the aminoacyl-tRNA.EF-Tu.GTP complex up to the GTP hydrolysis stage on the ribosome. The chain is Elongation factor Ts from Francisella tularensis subsp. tularensis (strain FSC 198).